Reading from the N-terminus, the 248-residue chain is 2,3-bisphosphoglycerate-dependent phosphoglycerate mutase (248 aa).

Substrate contacts are provided by residues 8–15, 21–22, R60, 87–90, K98, 114–115, and 183–184; these read RHGESLWN, TG, EKHY, RR, and GN. H9 acts as the Tele-phosphohistidine intermediate in catalysis. The active-site Proton donor/acceptor is the E87.

This sequence belongs to the phosphoglycerate mutase family. BPG-dependent PGAM subfamily.

It carries out the reaction (2R)-2-phosphoglycerate = (2R)-3-phosphoglycerate. The protein operates within carbohydrate degradation; glycolysis; pyruvate from D-glyceraldehyde 3-phosphate: step 3/5. In terms of biological role, catalyzes the interconversion of 2-phosphoglycerate and 3-phosphoglycerate. The sequence is that of 2,3-bisphosphoglycerate-dependent phosphoglycerate mutase from Porphyromonas gingivalis (strain ATCC 33277 / DSM 20709 / CIP 103683 / JCM 12257 / NCTC 11834 / 2561).